The sequence spans 477 residues: Glutamyl-tRNA reductase (477 aa).

Substrate contacts are provided by residues 49–52 (TCNR), S109, 114–116 (EQQ), and Q120. Catalysis depends on C50, which acts as the Nucleophile. 189–194 (GAGAMG) contributes to the NADP(+) binding site.

This sequence belongs to the glutamyl-tRNA reductase family. In terms of assembly, homodimer.

It carries out the reaction (S)-4-amino-5-oxopentanoate + tRNA(Glu) + NADP(+) = L-glutamyl-tRNA(Glu) + NADPH + H(+). Its pathway is porphyrin-containing compound metabolism; protoporphyrin-IX biosynthesis; 5-aminolevulinate from L-glutamyl-tRNA(Glu): step 1/2. In terms of biological role, catalyzes the NADPH-dependent reduction of glutamyl-tRNA(Glu) to glutamate 1-semialdehyde (GSA). The sequence is that of Glutamyl-tRNA reductase from Nocardia farcinica (strain IFM 10152).